A 548-amino-acid polypeptide reads, in one-letter code: Chaperonin GroEL (548 aa).

Residues 30–33 (TLGP), Lys-51, 87–91 (DGTTT), Gly-415, and Asp-495 each bind ATP.

This sequence belongs to the chaperonin (HSP60) family. Forms a cylinder of 14 subunits composed of two heptameric rings stacked back-to-back. Interacts with the co-chaperonin GroES.

Its subcellular location is the cytoplasm. The enzyme catalyses ATP + H2O + a folded polypeptide = ADP + phosphate + an unfolded polypeptide.. In terms of biological role, together with its co-chaperonin GroES, plays an essential role in assisting protein folding. The GroEL-GroES system forms a nano-cage that allows encapsulation of the non-native substrate proteins and provides a physical environment optimized to promote and accelerate protein folding. In Colwellia psychrerythraea (strain 34H / ATCC BAA-681) (Vibrio psychroerythus), this protein is Chaperonin GroEL.